We begin with the raw amino-acid sequence, 657 residues long: Pyoverdine export ATP-binding/permease protein PvdT (657 aa).

One can recognise an ABC transporter domain in the interval 6 to 245 (IDLRGIRKSY…RSVNPAALQA (240 aa)). Residue 43-50 (GASGSGKS) participates in ATP binding. Transmembrane regions (helical) follow at residues 285–305 (ALTL…LAVG), 539–559 (IAAI…LMTV), 590–610 (LSVV…AALL), and 620–640 (LPAV…FGFM).

This sequence belongs to the ABC transporter superfamily. Macrolide exporter (TC 3.A.1.122) family. In terms of assembly, part of the tripartite efflux system PvdRT-OpmQ, which is composed of an inner membrane component with both ATPase and permease domains, PvdT, a periplasmic membrane fusion protein, PvdR, and an outer membrane component, OpmQ.

It is found in the cell inner membrane. Part of the tripartite efflux system PvdRT-OpmQ required for the secretion into the extracellular milieu of the siderophore pyoverdine (PVD), which is involved in iron acquisition. This subunit binds PVD and drives its secretion by hydrolyzing ATP. The system is responsible for export of newly synthesized PVD after the final steps of biosynthesis have taken place in the periplasm. It is also responsible for recycling of PVD after internalization of ferri-PVD into the periplasm by the outer-membrane receptor FpvA and release of iron from PVD, thus making PVD available for new cycles of iron uptake. The polypeptide is Pyoverdine export ATP-binding/permease protein PvdT (Pseudomonas syringae pv. syringae (strain B728a)).